The following is a 347-amino-acid chain: D-fructose 1,6-bisphosphatase class 2/sedoheptulose 1,7-bisphosphatase (347 aa).

Residues aspartate 33, glutamate 57, aspartate 97, and glutamate 100 each contribute to the Mn(2+) site. Residues 100–102, tyrosine 131, 176–178, and 198–200 each bind substrate; these read EGT, RKR, and DGD. Residue glutamate 225 coordinates Mn(2+).

Belongs to the FBPase class 2 family. Homotetramer. Mn(2+) serves as cofactor.

The enzyme catalyses beta-D-fructose 1,6-bisphosphate + H2O = beta-D-fructose 6-phosphate + phosphate. It carries out the reaction D-sedoheptulose 1,7-bisphosphate + H2O = D-sedoheptulose 7-phosphate + phosphate. It participates in carbohydrate biosynthesis; Calvin cycle. Catalyzes the hydrolysis of fructose 1,6-bisphosphate (Fru 1,6-P2) and sedoheptulose 1,7-bisphosphate (Sed 1,7-P2) to fructose 6-phosphate and sedoheptulose 7-phosphate, respectively. The sequence is that of D-fructose 1,6-bisphosphatase class 2/sedoheptulose 1,7-bisphosphatase from Synechococcus sp. (strain JA-2-3B'a(2-13)) (Cyanobacteria bacterium Yellowstone B-Prime).